Reading from the N-terminus, the 399-residue chain is Endonuclease III homolog 1 (399 aa).

Residues 1 to 26 constitute a mitochondrion transit peptide; that stretch reads MQKISKYSSMAILRKRPLVKTETGPE. The short motif at 14–37 is the Bipartite nuclear localization signal element; the sequence is RKRPLVKTETGPESELLPEKRTKI. A Glycyl lysine isopeptide (Lys-Gly) (interchain with G-Cter in SUMO) cross-link involves residue K194. The HhH domain occupies 223–247; it reads FSSDVPATINELLGLPGVGPKMAYL. K243 functions as the Nucleophile; for N-glycosylase activity in the catalytic mechanism.

This sequence belongs to the Nth/MutY family. Post-translationally, monosumoylated. Sumoylation is associated with targeting of NTG1 to nuclei containing oxidative DNA damage.

It localises to the nucleus. The protein resides in the mitochondrion. The catalysed reaction is 2'-deoxyribonucleotide-(2'-deoxyribose 5'-phosphate)-2'-deoxyribonucleotide-DNA = a 3'-end 2'-deoxyribonucleotide-(2,3-dehydro-2,3-deoxyribose 5'-phosphate)-DNA + a 5'-end 5'-phospho-2'-deoxyribonucleoside-DNA + H(+). In terms of biological role, bifunctional DNA N-glycosylase with associated apurinic/apyrimidinic (AP) lyase function that catalyzes the first step in base excision repair (BER), the primary repair pathway for the repair of oxidative DNA damage. The DNA N-glycosylase activity releases the damaged DNA base from DNA by cleaving the N-glycosidic bond, leaving an AP site. The AP-lyase activity cleaves the phosphodiester bond 3' to the AP site by a beta-elimination. Primarily recognizes and repairs oxidative base damage of pyrimidines, but also purine-derived lesions, alkylation damage and cytosine photoproducts generated by UV irradiation as well as abasic sites. Also has 8-oxoguanine DNA glycosylase activity. The AP lyase can incise AP sites opposite all four bases. May also play a role in the regulation of mtDNA copy number by introducing a double-stranded break (DSB) at the mtDNA replication origin ori5, initiating the rolling-circle mtDNA replication. This chain is Endonuclease III homolog 1, found in Saccharomyces cerevisiae (strain ATCC 204508 / S288c) (Baker's yeast).